A 208-amino-acid chain; its full sequence is Small ribosomal subunit protein eS8 (208 aa).

Residues 1-40 form a disordered region; sequence MGISRDNWHKRRKTGGKRKPVHKKRKYELGRPPSNTKLGP. Over residues 8–26 the composition is skewed to basic residues; sequence WHKRRKTGGKRKPVHKKRK.

It belongs to the eukaryotic ribosomal protein eS8 family. Component of the small ribosomal subunit.

It localises to the cytoplasm. Component of the small ribosomal subunit. The ribosome is a large ribonucleoprotein complex responsible for the synthesis of proteins in the cell. This is Small ribosomal subunit protein eS8 (rps8) from Ictalurus punctatus (Channel catfish).